A 104-amino-acid chain; its full sequence is MIRKAFVMQVNADAHEEYQRRHNPIWPELEAVLKSHGAHHYAIYLDQERNLLFATVEIESEERWNAVASTDVCQRWWKHMRDVMPANPDNSPASAELKEVFYLQ.

Y18 contributes to the substrate binding site. H22 serves as the catalytic Proton donor. Residues Y41 and 76–77 (WW) contribute to the substrate site.

This sequence belongs to the rhamnose mutarotase family. As to quaternary structure, homodimer.

Its subcellular location is the cytoplasm. The catalysed reaction is alpha-L-rhamnose = beta-L-rhamnose. It participates in carbohydrate metabolism; L-rhamnose metabolism. In terms of biological role, involved in the anomeric conversion of L-rhamnose. This is L-rhamnose mutarotase from Salmonella newport (strain SL254).